Consider the following 318-residue polypeptide: Electron transfer flavoprotein subunit alpha (318 aa).

257 to 285 contributes to the FAD binding site; it reads LYIALGISGAIQHRAGMQTSKTIVAVNKD.

This sequence belongs to the ETF alpha-subunit/FixB family. As to quaternary structure, heterodimer of an alpha and a beta subunit. It depends on FAD as a cofactor.

Functionally, the electron transfer flavoprotein serves as a specific electron acceptor for other dehydrogenases. It transfers the electrons to the main respiratory chain via ETF-ubiquinone oxidoreductase (ETF dehydrogenase). This is Electron transfer flavoprotein subunit alpha (etfA) from Mycobacterium tuberculosis (strain CDC 1551 / Oshkosh).